The following is a 330-amino-acid chain: Malate dehydrogenase (330 aa).

12-18 (GAAGQIG) is a binding site for NAD(+). Residues Arg-93 and Arg-99 each contribute to the substrate site. Residues Asn-106, Gln-113, and 130-132 (VGN) contribute to the NAD(+) site. Residues Asn-132 and Arg-163 each coordinate substrate. His-188 serves as the catalytic Proton acceptor.

It belongs to the LDH/MDH superfamily. MDH type 2 family.

It carries out the reaction (S)-malate + NAD(+) = oxaloacetate + NADH + H(+). Its function is as follows. Catalyzes the reversible oxidation of malate to oxaloacetate. This is Malate dehydrogenase from Thermobifida fusca (strain YX).